The sequence spans 413 residues: Protein CDKN2AIP homolog B (413 aa).

Residues 21–118 (LERVRGQCES…TTRDELVAKV (98 aa)) form the XRN2-binding (XTBD) domain. The interval 118-266 (VKKRGNSSSN…PTRRFTTEHT (149 aa)) is disordered. A compositionally biased stretch (basic and acidic residues) spans 183–193 (NKREAHSRTDV).

Belongs to the CARF family.

The protein resides in the nucleus. The protein localises to the nucleoplasm. Its function is as follows. May regulate DNA damage response and cell proliferation. The polypeptide is Protein CDKN2AIP homolog B (cdkn2aip-b) (Xenopus laevis (African clawed frog)).